Reading from the N-terminus, the 150-residue chain is Small ribosomal subunit protein eS19 (150 aa).

Belongs to the eukaryotic ribosomal protein eS19 family. Part of the 30S ribosomal subunit.

Functionally, may be involved in maturation of the 30S ribosomal subunit. The sequence is that of Small ribosomal subunit protein eS19 from Pyrococcus horikoshii (strain ATCC 700860 / DSM 12428 / JCM 9974 / NBRC 100139 / OT-3).